The sequence spans 163 residues: Large ribosomal subunit protein uL10 (163 aa).

The protein belongs to the universal ribosomal protein uL10 family. Part of the ribosomal stalk of the 50S ribosomal subunit. The N-terminus interacts with L11 and the large rRNA to form the base of the stalk. The C-terminus forms an elongated spine to which L12 dimers bind in a sequential fashion forming a multimeric L10(L12)X complex.

Functionally, forms part of the ribosomal stalk, playing a central role in the interaction of the ribosome with GTP-bound translation factors. In Actinobacillus pleuropneumoniae serotype 5b (strain L20), this protein is Large ribosomal subunit protein uL10.